A 475-amino-acid chain; its full sequence is Ubiquilin-like protein (475 aa).

The 75-residue stretch at 31–105 (TRVIVKTAGN…IYLVIKSKQG (75 aa)) folds into the Ubiquitin-like domain. Disordered regions lie at residues 113–138 (FRDLPTNDPCHRDRNTKGNSSRVHQP) and 305–325 (QVQSSPPPPPPSQEQQDQLTQ). Positions 129–138 (KGNSSRVHQP) are enriched in polar residues.

The polypeptide is Ubiquilin-like protein (UBQLNL) (Homo sapiens (Human)).